A 215-amino-acid polypeptide reads, in one-letter code: Cytidylate kinase (215 aa).

10-18 contributes to the ATP binding site; sequence GPAAAGKST.

It belongs to the cytidylate kinase family. Type 1 subfamily.

It is found in the cytoplasm. The catalysed reaction is CMP + ATP = CDP + ADP. The enzyme catalyses dCMP + ATP = dCDP + ADP. The polypeptide is Cytidylate kinase (Staphylococcus epidermidis (strain ATCC 35984 / DSM 28319 / BCRC 17069 / CCUG 31568 / BM 3577 / RP62A)).